The following is a 396-amino-acid chain: Phosphoglycerate kinase (396 aa).

Residues 19–21, Arg-34, 57–60, Arg-116, and Arg-153 each bind substrate; these read DFN and HLGK. Residues Lys-204, Glu-324, and 351 to 354 each bind ATP; that span reads GGDT.

It belongs to the phosphoglycerate kinase family. In terms of assembly, monomer.

Its subcellular location is the cytoplasm. It carries out the reaction (2R)-3-phosphoglycerate + ATP = (2R)-3-phospho-glyceroyl phosphate + ADP. Its pathway is carbohydrate degradation; glycolysis; pyruvate from D-glyceraldehyde 3-phosphate: step 2/5. The polypeptide is Phosphoglycerate kinase (Maridesulfovibrio salexigens (strain ATCC 14822 / DSM 2638 / NCIMB 8403 / VKM B-1763) (Desulfovibrio salexigens)).